Here is a 114-residue protein sequence, read N- to C-terminus: Large ribosomal subunit protein bL19 (114 aa).

The protein belongs to the bacterial ribosomal protein bL19 family.

Its function is as follows. This protein is located at the 30S-50S ribosomal subunit interface and may play a role in the structure and function of the aminoacyl-tRNA binding site. This is Large ribosomal subunit protein bL19 from Clostridium acetobutylicum (strain ATCC 824 / DSM 792 / JCM 1419 / IAM 19013 / LMG 5710 / NBRC 13948 / NRRL B-527 / VKM B-1787 / 2291 / W).